The following is a 177-amino-acid chain: Peptide methionine sulfoxide reductase MsrA (177 aa).

The active site involves Cys-15.

Belongs to the MsrA Met sulfoxide reductase family.

The enzyme catalyses L-methionyl-[protein] + [thioredoxin]-disulfide + H2O = L-methionyl-(S)-S-oxide-[protein] + [thioredoxin]-dithiol. It catalyses the reaction [thioredoxin]-disulfide + L-methionine + H2O = L-methionine (S)-S-oxide + [thioredoxin]-dithiol. Functionally, has an important function as a repair enzyme for proteins that have been inactivated by oxidation. Catalyzes the reversible oxidation-reduction of methionine sulfoxide in proteins to methionine. The chain is Peptide methionine sulfoxide reductase MsrA from Listeria monocytogenes serotype 4a (strain HCC23).